Consider the following 201-residue polypeptide: Potassium-transporting ATPase KdpC subunit (201 aa).

A helical membrane pass occupies residues 12–34 (LLALTMITGLAYPLAVTGLATVL). The tract at residues 69 to 102 (RPSATVAPDPADSSKTVSAPYNAANSGGSNLGPT) is disordered. Positions 81-101 (SSKTVSAPYNAANSGGSNLGP) are enriched in polar residues.

This sequence belongs to the KdpC family. As to quaternary structure, the system is composed of three essential subunits: KdpA, KdpB and KdpC.

It is found in the cell inner membrane. Functionally, part of the high-affinity ATP-driven potassium transport (or Kdp) system, which catalyzes the hydrolysis of ATP coupled with the electrogenic transport of potassium into the cytoplasm. This subunit acts as a catalytic chaperone that increases the ATP-binding affinity of the ATP-hydrolyzing subunit KdpB by the formation of a transient KdpB/KdpC/ATP ternary complex. This Rhodopseudomonas palustris (strain TIE-1) protein is Potassium-transporting ATPase KdpC subunit.